The sequence spans 278 residues: Protein mtd-1 (278 aa).

The signal sequence occupies residues 1-17 (MRSSLLLLVFFLSIGWA). Topologically, residues 18-254 (RYCVHNEKSW…EMLEEIEARK (237 aa)) are extracellular. N40, N73, N163, and N190 each carry an N-linked (GlcNAc...) asparagine glycan. A helical membrane pass occupies residues 255 to 271 (VPVDSSAPVNIILSIAF). At 272-278 (SIFLIHF) the chain is on the cytoplasmic side.

The protein localises to the cell membrane. In terms of biological role, plays a role in mechanosensory transduction (touch sensitivity). This is Protein mtd-1 from Caenorhabditis elegans.